A 323-amino-acid chain; its full sequence is GTP 3',8-cyclase (323 aa).

The Radical SAM core domain maps to 4 to 226 (TFQRQINYLR…LEPFPDLATN (223 aa)). Arg-13 is a GTP binding site. Cys-20 and Cys-24 together coordinate [4Fe-4S] cluster. An S-adenosyl-L-methionine-binding site is contributed by Tyr-26. Cys-27 serves as a coordination point for [4Fe-4S] cluster. Arg-63 contacts GTP. Gly-67 lines the S-adenosyl-L-methionine pocket. A GTP-binding site is contributed by Thr-94. Ser-118 serves as a coordination point for S-adenosyl-L-methionine. Position 155 (Lys-155) interacts with GTP. Met-189 lines the S-adenosyl-L-methionine pocket. Cys-252 and Cys-255 together coordinate [4Fe-4S] cluster. 257–259 (RLR) provides a ligand contact to GTP. Cys-269 contributes to the [4Fe-4S] cluster binding site.

This sequence belongs to the radical SAM superfamily. MoaA family. In terms of assembly, monomer and homodimer. Requires [4Fe-4S] cluster as cofactor.

It catalyses the reaction GTP + AH2 + S-adenosyl-L-methionine = (8S)-3',8-cyclo-7,8-dihydroguanosine 5'-triphosphate + 5'-deoxyadenosine + L-methionine + A + H(+). It participates in cofactor biosynthesis; molybdopterin biosynthesis. In terms of biological role, catalyzes the cyclization of GTP to (8S)-3',8-cyclo-7,8-dihydroguanosine 5'-triphosphate. This chain is GTP 3',8-cyclase, found in Moorella thermoacetica (strain ATCC 39073 / JCM 9320).